We begin with the raw amino-acid sequence, 261 residues long: Claudin-18 (261 aa).

Residues 1–6 lie on the Cytoplasmic side of the membrane; the sequence is MSTTRC. Residues 7–27 traverse the membrane as a helical segment; the sequence is QVVGFLLSILGLAGCIVATEM. Over 28–80 the chain is Extracellular; sequence DMWSTQDLYDNPVTAVFQYEGLWRSCVQQSSGFTECRPYLTILGLPAMLQAVR. The helical transmembrane segment at 81–101 threads the bilayer; that stretch reads ALMIVGIVLSVIGLLVAIFAL. Residues 102-122 are Cytoplasmic-facing; that stretch reads KCIRMGNMDDSAKAKMTLTSG. Residues 123 to 143 form a helical membrane-spanning segment; that stretch reads IMFIIAGLCAIAGVSVFANML. Topologically, residues 144 to 174 are extracellular; that stretch reads VTNFWMSTASMFTSMGGMVQTVQTRYTFGAA. A helical transmembrane segment spans residues 175–195; that stretch reads LFVGWVAGGLTLIGGVLMCIA. A required for role in regulation of RANKL-induced osteoclast differentiation region spans residues 195 to 261; the sequence is ACRGLAPEET…QSPPSKYDYV (67 aa). The Cytoplasmic portion of the chain corresponds to 196–261; the sequence is CRGLAPEETN…QSPPSKYDYV (66 aa). At Ser-214 the chain carries Phosphoserine. The interval 228 to 261 is disordered; the sequence is SSGFESNTRNKKIYDGGARTEDEGQSPPSKYDYV. A compositionally biased stretch (basic and acidic residues) spans 239–249; it reads KIYDGGARTED.

Belongs to the claudin family. As to quaternary structure, interacts with TJP2/ZO-2. Interacts with TJP1/ZO-1. Interacts with YAP1 (phosphorylated); the interaction sequesters YAP1 away from the nucleus and thereby restricts transcription of YAP1 target genes. Interacts with CLDN19.

The protein localises to the cell junction. It localises to the tight junction. It is found in the cell membrane. Functionally, involved in alveolar fluid homeostasis via regulation of alveolar epithelial tight junction composition and therefore ion transport and solute permeability, potentially via downstream regulation of the actin cytoskeleton organization and beta-2-adrenergic signaling. Required for lung alveolarization and maintenance of the paracellular alveolar epithelial barrier. Acts to maintain epithelial progenitor cell proliferation and organ size, via regulation of YAP1 localization away from the nucleus and thereby restriction of YAP1 target gene transcription. Acts as a negative regulator of RANKL-induced osteoclast differentiation, potentially via relocation of TJP2/ZO-2 away from the nucleus, subsequently involved in bone resorption in response to calcium deficiency. Mediates the osteoprotective effects of estrogen, potentially via acting downstream of estrogen signaling independently of RANKL signaling pathways. This Bos taurus (Bovine) protein is Claudin-18 (CLDN18).